The primary structure comprises 828 residues: Periplasmic nitrate reductase (828 aa).

The segment at residues 1-31 is a signal peptide (tat-type signal); sequence MKLSRRHFMKANAVAAAAAVAGITIPIAVRA. Residues 39–95 form the 4Fe-4S Mo/W bis-MGD-type domain; sequence IHWDKAPCRFCGVGCGVLVGTQNGRIVASQGDPEAPVNRGLNCIKGYFLPKIMYGQD. [4Fe-4S] cluster contacts are provided by Cys46, Cys49, Cys53, and Cys81. Mo-bis(molybdopterin guanine dinucleotide) contacts are provided by residues Lys83, Gln150, Asn175, Cys179, 212–219, 243–247, 262–264, Met372, Gln376, Asn482, 508–509, Lys531, Asp558, and 718–727; these read WGSNMAEM, STYQH, QTD, SD, and TGRVLEHWHT. Phe794 provides a ligand contact to substrate. Mo-bis(molybdopterin guanine dinucleotide)-binding residues include Asn802 and Lys819.

Belongs to the prokaryotic molybdopterin-containing oxidoreductase family. NasA/NapA/NarB subfamily. In terms of assembly, component of the periplasmic nitrate reductase NapAB complex composed of NapA and NapB. The cofactor is [4Fe-4S] cluster. Requires Mo-bis(molybdopterin guanine dinucleotide) as cofactor. Post-translationally, predicted to be exported by the Tat system. The position of the signal peptide cleavage has not been experimentally proven.

Its subcellular location is the periplasm. The enzyme catalyses 2 Fe(II)-[cytochrome] + nitrate + 2 H(+) = 2 Fe(III)-[cytochrome] + nitrite + H2O. Functionally, catalytic subunit of the periplasmic nitrate reductase complex NapAB. Receives electrons from NapB and catalyzes the reduction of nitrate to nitrite. The protein is Periplasmic nitrate reductase of Pectobacterium atrosepticum (strain SCRI 1043 / ATCC BAA-672) (Erwinia carotovora subsp. atroseptica).